Consider the following 122-residue polypeptide: Small ribosomal subunit protein uS13 (122 aa).

Positions 93 to 122 (RRGLPVRGQKTKTNARTRKGPKKTMANKKK) are disordered.

This sequence belongs to the universal ribosomal protein uS13 family. As to quaternary structure, part of the 30S ribosomal subunit. Forms a loose heterodimer with protein S19. Forms two bridges to the 50S subunit in the 70S ribosome.

Its function is as follows. Located at the top of the head of the 30S subunit, it contacts several helices of the 16S rRNA. In the 70S ribosome it contacts the 23S rRNA (bridge B1a) and protein L5 of the 50S subunit (bridge B1b), connecting the 2 subunits; these bridges are implicated in subunit movement. Contacts the tRNAs in the A and P-sites. This chain is Small ribosomal subunit protein uS13, found in Clostridium botulinum (strain Alaska E43 / Type E3).